The primary structure comprises 386 residues: FHA domain-containing protein At4g14490 (386 aa).

One can recognise an FHA domain in the interval 28–78 (IRVGRIVRGNEIAIKDAGISTKHLRIESDSGNWVIQDLGSSNGTLLNSNAL). A disordered region spans residues 286-311 (KNKGKNKKADQKPLKSFENDEVTDSG). Over residues 292–303 (KKADQKPLKSFE) the composition is skewed to basic and acidic residues.

This Arabidopsis thaliana (Mouse-ear cress) protein is FHA domain-containing protein At4g14490.